We begin with the raw amino-acid sequence, 140 residues long: Large ribosomal subunit protein bL19 (140 aa).

Residues 113–126 show a composition bias toward basic and acidic residues; the sequence is RIAERQDRTADGKI. Residues 113–140 are disordered; sequence RIAERQDRTADGKIKKGGKSAPAPTAAE.

Belongs to the bacterial ribosomal protein bL19 family.

In terms of biological role, this protein is located at the 30S-50S ribosomal subunit interface and may play a role in the structure and function of the aminoacyl-tRNA binding site. The chain is Large ribosomal subunit protein bL19 from Xanthobacter autotrophicus (strain ATCC BAA-1158 / Py2).